The primary structure comprises 222 residues: UPF0502 protein Lcho_2066 (222 aa).

This sequence belongs to the UPF0502 family.

This is UPF0502 protein Lcho_2066 from Leptothrix cholodnii (strain ATCC 51168 / LMG 8142 / SP-6) (Leptothrix discophora (strain SP-6)).